The primary structure comprises 508 residues: MKLQLAAVATLAVLTSPAFGRVLPDGKYVKIPFTKKKNGDNGELSKRSNGHEKFVLANEQSFYSVELAIGTPSQNLTVLLDTGSADLWVPGKGNPYCGSVMDCDQYGVFDKTKSSTFKANKSSPFYAAYGDGTYAEGAFGQDKLKYNELDLSGLSFAVANESNSTFGVLGIGLSTLEVTYSGKVAIMDKRSYEYDNFPLFLKHSGAIDATAYSLFLNDESQSSGSILFGAVDHSKYEGQLYTIPLVNLYKSQGYQHPVAFDVTLQGLGLQTDKRNITLTTTKLPALLDSGTTLTYLPSQAVALLAKSLNASYSKTLGYYEYTCPSSDNKTSVAFDFGGFRINAPLSDFTMQTSVGTCVLAIIPQAGNATAILGDSFLRNAYVVYDLDNYEISLAQAKYGTGKENVEVIKSTVPSAIRAPSYNNTWSNYASATSGGNIFTTVRTFNGTSTATTTRSTTTKKTNSTTTAKSTHKSKRALQRAATNSASSIRSTLGLLLVPSLLILSVFFS.

The signal sequence occupies residues 1-20 (MKLQLAAVATLAVLTSPAFG). Residues 21–47 (RVLPDGKYVKIPFTKKKNGDNGELSKR) constitute a propeptide that is removed on maturation. Positions 63–394 (YSVELAIGTP…DLDNYEISLA (332 aa)) constitute a Peptidase A1 domain. N75 carries N-linked (GlcNAc...) asparagine glycosylation. The active site involves D81. N-linked (GlcNAc...) asparagine glycans are attached at residues N120, N160, N163, and N275. The active site involves D288. N309, N328, N367, N422, N445, and N462 each carry an N-linked (GlcNAc...) asparagine glycan. Residues 448–468 (STATTTRSTTTKKTNSTTTAK) show a composition bias toward low complexity. A disordered region spans residues 448–476 (STATTTRSTTTKKTNSTTTAKSTHKSKRA). The GPI-anchor amidated asparagine moiety is linked to residue N483. Residues 484 to 508 (SASSIRSTLGLLLVPSLLILSVFFS) constitute a propeptide, removed in mature form.

The protein belongs to the peptidase A1 family. In terms of processing, can also be processed to start at Phe-54.

It localises to the cell membrane. Cleaves proteins C-terminally to mono- and paired-basic residues. Required for cell wall integrity. This Saccharomyces cerevisiae (strain ATCC 204508 / S288c) (Baker's yeast) protein is Aspartic proteinase yapsin-3 (YPS3).